A 655-amino-acid chain; its full sequence is NACHT, LRR and PYD domains-containing protein 10 (655 aa).

In terms of domain architecture, Pyrin spans 1-96 (MAMAKARKPR…VDQLSHICLH (96 aa)). The NACHT domain occupies 167–484 (SLVVLQGSAG…AMSYLVKEDQ (318 aa)). ATP is bound at residue 173–180 (GSAGTGKT). Polar residues predominate over residues 597–609 (QSQNLFSVKSSLS). Residues 597–655 (QSQNLFSVKSSLSHGPKEEQKCPSVHGQKEGKDNIAGTQKEASTGKGRGTEETPKNTYI) form a disordered region. Composition is skewed to basic and acidic residues over residues 611 to 629 (GPKE…EGKD) and 644 to 655 (RGTEETPKNTYI).

It belongs to the NLRP family. As to quaternary structure, oligomerizes. Interacts with PYCARD. Also interacts with CASP1 and IL1B. Interacts with NOD1 and components of the NOD1 signaling pathway including RIPK2, NR2C2/TAK1 and IKBKG/NEMO. As to expression, highly expressed in basal and suprabasal epidermal cell layers with lower levels in dermal fibroblast cells (at protein level). Widely expressed with highest levels in heart, brain and skeletal muscle. Also expressed in liver, colon, dermis and epidermis. Little expression detected in myeloid cells or peripheral blood mononuclear cells.

The protein localises to the cytoplasm. It is found in the cell membrane. Inhibits autoprocessing of CASP1, CASP1-dependent IL1B secretion, PYCARD aggregation and PYCARD-mediated apoptosis but not apoptosis induced by FAS or BID. Displays anti-inflammatory activity. Required for immunity against C.albicans infection. Involved in the innate immune response by contributing to pro-inflammatory cytokine release in response to invasive bacterial infection. Contributes to T-cell-mediated inflammatory responses in the skin. Plays a role in protection against periodontitis through its involvement in induction of IL1A via ERK activation in oral epithelial cells infected with periodontal pathogens. Exhibits both ATPase and GTPase activities. This Homo sapiens (Human) protein is NACHT, LRR and PYD domains-containing protein 10 (NLRP10).